Here is a 548-residue protein sequence, read N- to C-terminus: Rhodopsin kinase GRK7 (548 aa).

Position 34 is a phosphoserine; by PKA (Ser-34). Residues 54 to 171 (FHSLCEQQPI…LASPFYDRFL (118 aa)) form the RGS domain. Residues 186 to 449 (FTEFRVLGKG…ADDPRKHPFF (264 aa)) form the Protein kinase domain. ATP is bound by residues 192–200 (LGKGGFGEV) and Lys-215. The Proton acceptor role is filled by Asp-311. Residues 450-515 (QTVNFPRLEA…GAVPVAWQEE (66 aa)) form the AGC-kinase C-terminal domain. The disordered stretch occupies residues 523-548 (EELNDPNRPSGDGKGDSSKSGVCLLL). A Cysteine methyl ester modification is found at Cys-545. Cys-545 is lipidated: S-geranylgeranyl cysteine. Positions 546 to 548 (LLL) are cleaved as a propeptide — removed in mature form.

Belongs to the protein kinase superfamily. AGC Ser/Thr protein kinase family. GPRK subfamily. As to quaternary structure, interacts (when prenylated) with PDE6D; this promotes release from membranes. Autophosphorylated. Phosphorylation at Ser-34 is regulated by light and activated by cAMP. In terms of tissue distribution, retina. Cones and rod.

It localises to the membrane. It catalyses the reaction L-threonyl-[rhodopsin] + ATP = O-phospho-L-threonyl-[rhodopsin] + ADP + H(+). The catalysed reaction is L-seryl-[rhodopsin] + ATP = O-phospho-L-seryl-[rhodopsin] + ADP + H(+). Its activity is regulated as follows. Inhibited by phosphorylation of Ser-34. In terms of biological role, retina-specific kinase involved in the shutoff of the photoresponse and adaptation to changing light conditions via cone opsin phosphorylation, including rhodopsin (RHO). In Ictidomys tridecemlineatus (Thirteen-lined ground squirrel), this protein is Rhodopsin kinase GRK7 (GRK7).